A 348-amino-acid polypeptide reads, in one-letter code: Dihydroorotase (348 aa).

Residues His17 and His19 each contribute to the Zn(2+) site. Residues 19-21 (HLR) and Asn45 contribute to the substrate site. Zn(2+)-binding residues include Lys103, His140, and His178. Lys103 bears the N6-carboxylysine mark. His140 is a binding site for substrate. Leu223 contributes to the substrate binding site. A Zn(2+)-binding site is contributed by Asp251. Residue Asp251 is part of the active site. Substrate-binding residues include His255 and Ala267.

Belongs to the metallo-dependent hydrolases superfamily. DHOase family. Class II DHOase subfamily. In terms of assembly, homodimer. Requires Zn(2+) as cofactor.

It catalyses the reaction (S)-dihydroorotate + H2O = N-carbamoyl-L-aspartate + H(+). It participates in pyrimidine metabolism; UMP biosynthesis via de novo pathway; (S)-dihydroorotate from bicarbonate: step 3/3. Catalyzes the reversible cyclization of carbamoyl aspartate to dihydroorotate. This is Dihydroorotase from Cronobacter sakazakii (strain ATCC BAA-894) (Enterobacter sakazakii).